Consider the following 151-residue polypeptide: Troponin C, isoallergen Bla g 6.0101 (151 aa).

EF-hand domains are found at residues 7 to 42, 43 to 78, 83 to 118, and 119 to 151; these read EQIQLLKKAFDAFDREKKGCISTEMVGTILEMLGHR, LDDDMLQEIIAEVDADGSGELEFEEFVSLASRFLVE, AMQQELREAFRLYDKEGNGYITTNVLREILKELDDK, and ITAEDLDMMIEEIDSDGSGTVDFDEFMEVMTGE. Residues D56, D58, S60, E62, and E67 each coordinate Ca(2+). Positions 132, 134, 136, 138, and 143 each coordinate Ca(2+).

The protein belongs to the troponin C family.

In terms of biological role, troponin is the central regulatory protein of striated muscle contraction. It consists of three components: Troponin-I (Tn-I) which is the inhibitor of actomyosin ATPase, Troponin-T (Tn-T) which contains the binding site for tropomyosin and Troponin-C (Tn-C). The binding of calcium to Tn-C abolishes the inhibitory action of Tn on actin filaments. In Blattella germanica (German cockroach), this protein is Troponin C, isoallergen Bla g 6.0101.